Reading from the N-terminus, the 248-residue chain is ATP synthase subunit a, chloroplastic (248 aa).

5 consecutive transmembrane segments (helical) span residues Gly-37–Gly-57, Val-96–Val-116, Ile-135–His-155, Leu-200–Leu-220, and Gly-221–Gly-241.

It belongs to the ATPase A chain family. As to quaternary structure, F-type ATPases have 2 components, CF(1) - the catalytic core - and CF(0) - the membrane proton channel. CF(1) has five subunits: alpha(3), beta(3), gamma(1), delta(1), epsilon(1). CF(0) has four main subunits: a, b, b' and c.

It localises to the plastid. The protein resides in the chloroplast thylakoid membrane. Its function is as follows. Key component of the proton channel; it plays a direct role in the translocation of protons across the membrane. The chain is ATP synthase subunit a, chloroplastic from Staurastrum punctulatum (Green alga).